The sequence spans 70 residues: Putative membrane protein insertion efficiency factor (70 aa).

The protein belongs to the UPF0161 family.

It is found in the cell inner membrane. Its function is as follows. Could be involved in insertion of integral membrane proteins into the membrane. This Geobacter sp. (strain M21) protein is Putative membrane protein insertion efficiency factor.